The primary structure comprises 412 residues: Aspartokinase (412 aa).

ACT domains follow at residues 266–340 (LTIR…GDTN) and 346–412 (IVGV…RQGE).

It belongs to the aspartokinase family.

The catalysed reaction is L-aspartate + ATP = 4-phospho-L-aspartate + ADP. The protein operates within amino-acid biosynthesis; L-lysine biosynthesis via DAP pathway; (S)-tetrahydrodipicolinate from L-aspartate: step 1/4. It functions in the pathway amino-acid biosynthesis; L-methionine biosynthesis via de novo pathway; L-homoserine from L-aspartate: step 1/3. It participates in amino-acid biosynthesis; L-threonine biosynthesis; L-threonine from L-aspartate: step 1/5. In Pseudomonas aeruginosa (strain ATCC 15692 / DSM 22644 / CIP 104116 / JCM 14847 / LMG 12228 / 1C / PRS 101 / PAO1), this protein is Aspartokinase (lysC).